A 465-amino-acid polypeptide reads, in one-letter code: Deoxyguanosinetriphosphate triphosphohydrolase-like protein (465 aa).

The segment at 1-22 (MKWDKLLNDKRRRESGVTRSKN) is disordered. In terms of domain architecture, HD spans 63–252 (RLTHSMEVST…LEVADDIAYL (190 aa)).

It belongs to the dGTPase family. Type 3 subfamily.

The polypeptide is Deoxyguanosinetriphosphate triphosphohydrolase-like protein (Listeria innocua serovar 6a (strain ATCC BAA-680 / CLIP 11262)).